A 227-amino-acid polypeptide reads, in one-letter code: 2-C-methyl-D-erythritol 4-phosphate cytidylyltransferase (227 aa).

Belongs to the IspD/TarI cytidylyltransferase family. IspD subfamily.

The catalysed reaction is 2-C-methyl-D-erythritol 4-phosphate + CTP + H(+) = 4-CDP-2-C-methyl-D-erythritol + diphosphate. Its pathway is isoprenoid biosynthesis; isopentenyl diphosphate biosynthesis via DXP pathway; isopentenyl diphosphate from 1-deoxy-D-xylulose 5-phosphate: step 2/6. Catalyzes the formation of 4-diphosphocytidyl-2-C-methyl-D-erythritol from CTP and 2-C-methyl-D-erythritol 4-phosphate (MEP). In Dehalococcoides mccartyi (strain ATCC BAA-2266 / KCTC 15142 / 195) (Dehalococcoides ethenogenes (strain 195)), this protein is 2-C-methyl-D-erythritol 4-phosphate cytidylyltransferase.